The primary structure comprises 360 residues: Homoserine O-acetyltransferase (360 aa).

In terms of domain architecture, AB hydrolase-1 spans 41-344 (NAILICHALT…DYGHDAFLVD (304 aa)). Serine 144 (nucleophile) is an active-site residue. Residue arginine 213 participates in substrate binding. Residues aspartate 305 and histidine 338 contribute to the active site. Aspartate 339 is a substrate binding site.

The protein belongs to the AB hydrolase superfamily. MetX family. Homodimer.

The protein resides in the cytoplasm. The enzyme catalyses L-homoserine + acetyl-CoA = O-acetyl-L-homoserine + CoA. The protein operates within amino-acid biosynthesis; L-methionine biosynthesis via de novo pathway; O-acetyl-L-homoserine from L-homoserine: step 1/1. Functionally, transfers an acetyl group from acetyl-CoA to L-homoserine, forming acetyl-L-homoserine. This chain is Homoserine O-acetyltransferase, found in Pasteurella multocida (strain Pm70).